An 851-amino-acid chain; its full sequence is UPF0182 protein CYA_1810 (851 aa).

Transmembrane regions (helical) follow at residues 7–27 (GLVL…LASF), 47–67 (VLAR…VVGS), 76–96 (ASTA…AWSL), 141–161 (FNLV…ELGL), 168–188 (LALS…LFLL), 220–240 (LPAT…FWAL), and 259–279 (WASS…FGLL).

It belongs to the UPF0182 family.

It localises to the cell membrane. This is UPF0182 protein CYA_1810 from Synechococcus sp. (strain JA-3-3Ab) (Cyanobacteria bacterium Yellowstone A-Prime).